The sequence spans 261 residues: Snake venom serine protease (261 aa).

Positions 1-20 (MALIGVLANLLILCLSYART) are cleaved as a signal peptide. Positions 21-24 (APDR) are excised as a propeptide. Positions 25–249 (IIGGLECNQN…YIDWIQDIMA (225 aa)) constitute a Peptidase S1 domain. 6 cysteine pairs are disulfide-bonded: C31–C163, C50–C66, C98–C256, C142–C210, C174–C189, and C200–C225. H65 acts as the Charge relay system in catalysis. A glycan (N-linked (GlcNAc...) asparagine) is linked at N103. The active-site Charge relay system is the D110. Residues N117 and N121 are each glycosylated (N-linked (GlcNAc...) asparagine). The active-site Charge relay system is the S204.

This sequence belongs to the peptidase S1 family. Snake venom subfamily. Monomer. As to expression, expressed by the venom gland.

It is found in the secreted. In terms of biological role, snake venom serine protease that may act in the hemostasis system of the prey. This chain is Snake venom serine protease, found in Philodryas olfersii (Green snake).